We begin with the raw amino-acid sequence, 323 residues long: tRNA U34 carboxymethyltransferase (323 aa).

Carboxy-S-adenosyl-L-methionine is bound by residues Lys-91, Trp-105, Lys-110, Gly-130, 152-154, 181-182, Met-196, Tyr-200, and Arg-315; these read DPT and IE.

The protein belongs to the class I-like SAM-binding methyltransferase superfamily. CmoB family. In terms of assembly, homotetramer.

It carries out the reaction carboxy-S-adenosyl-L-methionine + 5-hydroxyuridine(34) in tRNA = 5-carboxymethoxyuridine(34) in tRNA + S-adenosyl-L-homocysteine + H(+). Its function is as follows. Catalyzes carboxymethyl transfer from carboxy-S-adenosyl-L-methionine (Cx-SAM) to 5-hydroxyuridine (ho5U) to form 5-carboxymethoxyuridine (cmo5U) at position 34 in tRNAs. The sequence is that of tRNA U34 carboxymethyltransferase from Shigella boydii serotype 18 (strain CDC 3083-94 / BS512).